Here is a 121-residue protein sequence, read N- to C-terminus: Holo-[acyl-carrier-protein] synthase (121 aa).

Residues Asp5 and Glu50 each coordinate Mg(2+).

This sequence belongs to the P-Pant transferase superfamily. AcpS family. Mg(2+) serves as cofactor.

It localises to the cytoplasm. It carries out the reaction apo-[ACP] + CoA = holo-[ACP] + adenosine 3',5'-bisphosphate + H(+). In terms of biological role, transfers the 4'-phosphopantetheine moiety from coenzyme A to a Ser of acyl-carrier-protein. This Sulfurimonas denitrificans (strain ATCC 33889 / DSM 1251) (Thiomicrospira denitrificans (strain ATCC 33889 / DSM 1251)) protein is Holo-[acyl-carrier-protein] synthase.